The sequence spans 88 residues: MKKARFTETQILRVLKEVEGGRHVKDVCRENGGSEASYYNWKSKYGGMESSDIKRMKEREEENRRLKQMYASLSLDHEILKDVVAKKL.

The protein belongs to the transposase 8 family.

This is Low calcium response locus protein S (lcrS) from Yersinia pestis.